Consider the following 294-residue polypeptide: 4-hydroxy-tetrahydrodipicolinate synthase (294 aa).

Residue T45 coordinates pyruvate. The active-site Proton donor/acceptor is the Y133. The Schiff-base intermediate with substrate role is filled by K161. I203 provides a ligand contact to pyruvate.

It belongs to the DapA family. Homotetramer; dimer of dimers.

The protein resides in the cytoplasm. It catalyses the reaction L-aspartate 4-semialdehyde + pyruvate = (2S,4S)-4-hydroxy-2,3,4,5-tetrahydrodipicolinate + H2O + H(+). Its pathway is amino-acid biosynthesis; L-lysine biosynthesis via DAP pathway; (S)-tetrahydrodipicolinate from L-aspartate: step 3/4. Functionally, catalyzes the condensation of (S)-aspartate-beta-semialdehyde [(S)-ASA] and pyruvate to 4-hydroxy-tetrahydrodipicolinate (HTPA). The sequence is that of 4-hydroxy-tetrahydrodipicolinate synthase from Buchnera aphidicola subsp. Acyrthosiphon pisum (strain 5A).